We begin with the raw amino-acid sequence, 160 residues long: Cytochrome b6-f complex subunit 4 (160 aa).

A run of 3 helical transmembrane segments spans residues 36–56 (LLYI…GLAV), 95–115 (LLGV…PFLE), and 131–151 (TVFL…TLPI).

This sequence belongs to the cytochrome b family. PetD subfamily. In terms of assembly, the 4 large subunits of the cytochrome b6-f complex are cytochrome b6, subunit IV (17 kDa polypeptide, petD), cytochrome f and the Rieske protein, while the 4 small subunits are petG, petL, petM and petN. The complex functions as a dimer.

The protein resides in the plastid. It is found in the chloroplast thylakoid membrane. Its function is as follows. Component of the cytochrome b6-f complex, which mediates electron transfer between photosystem II (PSII) and photosystem I (PSI), cyclic electron flow around PSI, and state transitions. The polypeptide is Cytochrome b6-f complex subunit 4 (Solanum bulbocastanum (Wild potato)).